The primary structure comprises 737 residues: Ribosome-releasing factor 2, mitochondrial (737 aa).

A mitochondrion-targeting transit peptide spans 1–29; sequence MLKYALHSGGMPRNRLLRQLSAHIFRRSY. The region spanning 31–310 is the tr-type G domain; sequence SNIRNIGILA…AVNTYLPAPE (280 aa). Residues 40–47, 104–108, and 158–161 each bind GTP; these read AHIDAGKT, DTPGH, and NKMD.

It belongs to the TRAFAC class translation factor GTPase superfamily. Classic translation factor GTPase family. EF-G/EF-2 subfamily.

It localises to the mitochondrion. In terms of biological role, mitochondrial GTPase that mediates the disassembly of ribosomes from messenger RNA at the termination of mitochondrial protein biosynthesis. Not involved in the GTP-dependent ribosomal translocation step during translation elongation. The protein is Ribosome-releasing factor 2, mitochondrial of Drosophila pseudoobscura pseudoobscura (Fruit fly).